A 447-amino-acid chain; its full sequence is Polyamine export protein (447 aa).

Residues 1-4 lie on the Cytoplasmic side of the membrane; sequence MLNS. Residues 1 to 197 enclose the CNNM transmembrane domain; sequence MLNSIFIIFC…ALAGVLRKQE (197 aa). The chain crosses the membrane as a helical span at residues 5–25; it reads IFIIFCLIAVSAFFSISEISL. At 26–54 the chain is on the periplasmic side; that stretch reads AASRKIKLKLLADEGSINAQRVLKMQENP. A helical transmembrane segment spans residues 55–75; sequence GMFFTVVQIGLNAVAILGGIV. Over 76–99 the chain is Cytoplasmic; sequence GDAAFSPAFSALFSHYMSPELSEQ. A helical transmembrane segment spans residues 100–120; it reads LSFILSFSLVTGLFILFADLT. Topologically, residues 121–141 are periplasmic; that stretch reads PKRIGMIAPEAVALRIINPMR. The helical transmembrane segment at 142-162 threads the bilayer; the sequence is FCLFVFRPLVWLFNGMANNIF. At 163–447 the chain is on the cytoplasmic side; sequence RLFKIPMVRK…DAQGKEDSAA (285 aa). 2 CBS domains span residues 216–275 and 282–343; these read MTSR…NQSM and QIRN…GLEE.

The protein belongs to the UPF0053 family. PaeA subfamily.

Its subcellular location is the cell inner membrane. In terms of biological role, involved in cadaverine and putrescine tolerance in stationary phase. May facilitate the efflux of both cadaverine and putrescine from the cytoplasm, reducing potentially toxic levels under certain stress conditions. This Salmonella typhimurium (strain 14028s / SGSC 2262) protein is Polyamine export protein.